Consider the following 483-residue polypeptide: Glutamyl-tRNA(Gln) amidotransferase subunit A (483 aa).

Active-site charge relay system residues include Lys75 and Ser150. The active-site Acyl-ester intermediate is Ser174.

The protein belongs to the amidase family. GatA subfamily. In terms of assembly, heterotrimer of A, B and C subunits.

It catalyses the reaction L-glutamyl-tRNA(Gln) + L-glutamine + ATP + H2O = L-glutaminyl-tRNA(Gln) + L-glutamate + ADP + phosphate + H(+). Its function is as follows. Allows the formation of correctly charged Gln-tRNA(Gln) through the transamidation of misacylated Glu-tRNA(Gln) in organisms which lack glutaminyl-tRNA synthetase. The reaction takes place in the presence of glutamine and ATP through an activated gamma-phospho-Glu-tRNA(Gln). The polypeptide is Glutamyl-tRNA(Gln) amidotransferase subunit A (Legionella pneumophila (strain Paris)).